The sequence spans 289 residues: Ribosomal RNA small subunit methyltransferase A (289 aa).

S-adenosyl-L-methionine contacts are provided by Asn21, Leu23, Gly48, Glu69, Asp94, and Asn120.

This sequence belongs to the class I-like SAM-binding methyltransferase superfamily. rRNA adenine N(6)-methyltransferase family. RsmA subfamily.

It is found in the cytoplasm. The catalysed reaction is adenosine(1518)/adenosine(1519) in 16S rRNA + 4 S-adenosyl-L-methionine = N(6)-dimethyladenosine(1518)/N(6)-dimethyladenosine(1519) in 16S rRNA + 4 S-adenosyl-L-homocysteine + 4 H(+). Functionally, specifically dimethylates two adjacent adenosines (A1518 and A1519) in the loop of a conserved hairpin near the 3'-end of 16S rRNA in the 30S particle. May play a critical role in biogenesis of 30S subunits. The polypeptide is Ribosomal RNA small subunit methyltransferase A (Haemophilus ducreyi (strain 35000HP / ATCC 700724)).